Here is a 124-residue protein sequence, read N- to C-terminus: Succinate dehydrogenase cytochrome b556 subunit (124 aa).

The Cytoplasmic portion of the chain corresponds to 1–29 (MTKIKQEIYNKRPTSPHLTIYKPQISSTL). A helical membrane pass occupies residues 30–55 (SILHRMTGVALFFVVSILVWWLILSK). At 56 to 67 (YDNNYLQLASCC) the chain is on the periplasmic side. A helical transmembrane segment spans residues 68–88 (IIKICLVAFSYSWCYHLCNGI). His83 contacts heme. The Cytoplasmic portion of the chain corresponds to 89–103 (RHLFWDIGYGFSIKA). A helical membrane pass occupies residues 104–124 (VNITGWCVVVCSILLTMLLWV).

The protein belongs to the cytochrome b560 family. Part of an enzyme complex containing four subunits: a flavoprotein, an iron-sulfur protein, plus two membrane-anchoring proteins, SdhC and SdhD. The complex can form homotrimers. It depends on heme as a cofactor.

It localises to the cell inner membrane. It participates in carbohydrate metabolism; tricarboxylic acid cycle. In terms of biological role, membrane-anchoring subunit of succinate dehydrogenase (SDH). The sequence is that of Succinate dehydrogenase cytochrome b556 subunit (sdhC) from Rickettsia prowazekii (strain Madrid E).